The following is a 209-amino-acid chain: Holliday junction branch migration complex subunit RuvA (209 aa).

The tract at residues 1 to 70 is domain I; sequence MINYLKGKTT…EDQQILYGFS (70 aa). The interval 71–149 is domain II; sequence TDSERDLFRQ…QWEQAIALKT (79 aa). Residues 150–160 are flexible linker; the sequence is PVSVGVPSREI. The interval 160–209 is domain III; that stretch reads ILEEVEMTLLALGYTDEEIDQAISAISQDNLLLKNPHVEEWLKSAIAWLS.

Belongs to the RuvA family. In terms of assembly, homotetramer. Forms an RuvA(8)-RuvB(12)-Holliday junction (HJ) complex. HJ DNA is sandwiched between 2 RuvA tetramers; dsDNA enters through RuvA and exits via RuvB. An RuvB hexamer assembles on each DNA strand where it exits the tetramer. Each RuvB hexamer is contacted by two RuvA subunits (via domain III) on 2 adjacent RuvB subunits; this complex drives branch migration. In the full resolvosome a probable DNA-RuvA(4)-RuvB(12)-RuvC(2) complex forms which resolves the HJ.

The protein resides in the cytoplasm. The RuvA-RuvB-RuvC complex processes Holliday junction (HJ) DNA during genetic recombination and DNA repair, while the RuvA-RuvB complex plays an important role in the rescue of blocked DNA replication forks via replication fork reversal (RFR). RuvA specifically binds to HJ cruciform DNA, conferring on it an open structure. The RuvB hexamer acts as an ATP-dependent pump, pulling dsDNA into and through the RuvAB complex. HJ branch migration allows RuvC to scan DNA until it finds its consensus sequence, where it cleaves and resolves the cruciform DNA. In Gloeothece citriformis (strain PCC 7424) (Cyanothece sp. (strain PCC 7424)), this protein is Holliday junction branch migration complex subunit RuvA.